We begin with the raw amino-acid sequence, 483 residues long: Cobyric acid synthase (483 aa).

A GATase cobBQ-type domain is found at 251-438 (ALIVAVPMLP…LHGVFSADRF (188 aa)). The Nucleophile role is filled by cysteine 333. Histidine 430 is a catalytic residue.

Belongs to the CobB/CobQ family. CobQ subfamily.

It functions in the pathway cofactor biosynthesis; adenosylcobalamin biosynthesis. In terms of biological role, catalyzes amidations at positions B, D, E, and G on adenosylcobyrinic A,C-diamide. NH(2) groups are provided by glutamine, and one molecule of ATP is hydrogenolyzed for each amidation. This is Cobyric acid synthase from Brucella melitensis biotype 2 (strain ATCC 23457).